Reading from the N-terminus, the 254-residue chain is Translation initiation factor 2 subunit alpha (254 aa).

Residues 10-81 enclose the S1 motif domain; it reads GDLVVVKITE…ERKVVDLSLK (72 aa).

This sequence belongs to the eIF-2-alpha family. As to quaternary structure, heterotrimer composed of an alpha, a beta and a gamma chain.

Functionally, eIF-2 functions in the early steps of protein synthesis by forming a ternary complex with GTP and initiator tRNA. This is Translation initiation factor 2 subunit alpha from Thermoplasma acidophilum (strain ATCC 25905 / DSM 1728 / JCM 9062 / NBRC 15155 / AMRC-C165).